A 381-amino-acid chain; its full sequence is MLEILRKPFRLAEYDLVLLLMVVALTSFGIVMVYSASSVMAAKNFHDGAYFLKRQLIFALVGCVGALVTMRIDYQLWRRWAVPLLFVSLILLVLVLIPGIGGKVKGASRWIRLPGFNLQPSEFTKIALIMYMAYSIDKKQDRIRLLSAGFLPYMVVLMILLGLLLKQPDMGAALTLAAVTIIMLFAAGTRLIFILGSGMVAMPFVVYLVVHSAYRLKRIKAFLNPEQDPTGIGWQIIQSKYAFGAGGFFGQGLGEGKQKLFYLPEAHTDFILSVIGEELGFIGVIVIIGMFFILVQRAMRIAMAAQDTFGRFLALGIAVLFAIEAVVNMAVVTGLFPTKGLALPFLSYGGSSLLISLFAVGILLNISAGLKLAPLTGKDAK.

The next 9 helical transmembrane spans lie at 16 to 36, 56 to 76, 80 to 100, 145 to 165, 168 to 188, 191 to 211, 274 to 294, 312 to 332, and 343 to 363; these read LVLL…VYSA, LIFA…DYQL, WAVP…IPGI, LLSA…GLLL, PDMG…FAAG, LIFI…LVVH, VIGE…FFIL, FLAL…MAVV, and LPFL…VGIL.

This sequence belongs to the SEDS family. FtsW subfamily.

It is found in the cell inner membrane. The catalysed reaction is [GlcNAc-(1-&gt;4)-Mur2Ac(oyl-L-Ala-gamma-D-Glu-L-Lys-D-Ala-D-Ala)](n)-di-trans,octa-cis-undecaprenyl diphosphate + beta-D-GlcNAc-(1-&gt;4)-Mur2Ac(oyl-L-Ala-gamma-D-Glu-L-Lys-D-Ala-D-Ala)-di-trans,octa-cis-undecaprenyl diphosphate = [GlcNAc-(1-&gt;4)-Mur2Ac(oyl-L-Ala-gamma-D-Glu-L-Lys-D-Ala-D-Ala)](n+1)-di-trans,octa-cis-undecaprenyl diphosphate + di-trans,octa-cis-undecaprenyl diphosphate + H(+). It participates in cell wall biogenesis; peptidoglycan biosynthesis. Its function is as follows. Peptidoglycan polymerase that is essential for cell division. This is Probable peptidoglycan glycosyltransferase FtsW from Trichlorobacter lovleyi (strain ATCC BAA-1151 / DSM 17278 / SZ) (Geobacter lovleyi).